A 250-amino-acid polypeptide reads, in one-letter code: tRNA (guanine-N(1)-)-methyltransferase (250 aa).

Residues Gly-115 and Leu-135–Leu-140 contribute to the S-adenosyl-L-methionine site.

It belongs to the RNA methyltransferase TrmD family. As to quaternary structure, homodimer.

The protein localises to the cytoplasm. It carries out the reaction guanosine(37) in tRNA + S-adenosyl-L-methionine = N(1)-methylguanosine(37) in tRNA + S-adenosyl-L-homocysteine + H(+). Its function is as follows. Specifically methylates guanosine-37 in various tRNAs. This Legionella pneumophila subsp. pneumophila (strain Philadelphia 1 / ATCC 33152 / DSM 7513) protein is tRNA (guanine-N(1)-)-methyltransferase.